Consider the following 122-residue polypeptide: Large ribosomal subunit protein uL14 (122 aa).

It belongs to the universal ribosomal protein uL14 family. As to quaternary structure, part of the 50S ribosomal subunit. Forms a cluster with proteins L3 and L19. In the 70S ribosome, L14 and L19 interact and together make contacts with the 16S rRNA in bridges B5 and B8.

Functionally, binds to 23S rRNA. Forms part of two intersubunit bridges in the 70S ribosome. The polypeptide is Large ribosomal subunit protein uL14 (Sphingopyxis alaskensis (strain DSM 13593 / LMG 18877 / RB2256) (Sphingomonas alaskensis)).